Here is a 491-residue protein sequence, read N- to C-terminus: MNTQQLAKLRSIVPEMRRVRHIHFVGIGGAGMGGIAEVLANEGYQISGSDLAPNPVTQQLLNLGATIYFNHRPENVRDASVVVVSSAISADNPEIVAAHEARIPVIRRAEMLAELMRFRHGIAIAGTHGKTTTTAMVSSIYAEAGLDPTFVNGGLVKAAGVHARLGHGRYLIAEADESDASFLHLQPMVAIVTNIEADHMDTYQGDFENLKQTFINFLHNLPFYGRAVMCVDDPVIRELLPRVGRQTTTYGFSEDADVRVEDYQQIGPQGHFTLLRQDKEPMRVTLNAPGRHNALNAAAAVAVATEEGIDDEAILRALESFQGTGRRFDFLGEFPLEPVNGKSGTAMLVDDYGHHPTEVDATIKAARAGWPDKNLVMLFQPHRFTRTRDLYDDFANVLTQVDTLLMLEVYPAGEAPIPGADSRSLCRTIRGRGKIDPILVPDPAQVAEMLAPVLTGNDLILVQGAGNIGKIARSLAEIKLKPQTPEEEQHD.

126-132 (GTHGKTT) contributes to the ATP binding site.

This sequence belongs to the MurCDEF family.

The protein resides in the cytoplasm. The enzyme catalyses UDP-N-acetyl-alpha-D-muramate + L-alanine + ATP = UDP-N-acetyl-alpha-D-muramoyl-L-alanine + ADP + phosphate + H(+). It participates in cell wall biogenesis; peptidoglycan biosynthesis. Its function is as follows. Cell wall formation. This is UDP-N-acetylmuramate--L-alanine ligase from Shigella flexneri serotype 5b (strain 8401).